A 958-amino-acid chain; its full sequence is Importin-13 (958 aa).

20 HEAT repeats span residues 19–49 (ENVEKALHQLYYDPNIENKNLAQKWLMQAQV), 51–83 (PQAWHFSWLLLNMDKVPEIQYSAPAPCTSRSPA), 90–130 (PDQY…LSMM), 137–174 (AVADMVRMFQAEDSNVDGRARCLALLELLTVLPEEFQT), 189–226 (LAQECGSVFPLLEQLLQQQDSPGFIKQKVLKCFSSWVQ), 231–263 (LMDCENLIQAAFTSLQDPELFDTAVEAVVNAIS), 271–320 (VNTL…ALLD), 325–367 (WQSF…DDIL), 370–433 (EPDK…YEML), 435–471 (AELLSSLYDKLGRLLTNTEQPSTWQHTEALLYGFQSI), 482–517 (VVPGLIGLIPRISISNVQLADTVMFTIGALSEWLAD), 519–553 (PVMINNVLPLVLQALGNPELSISSVSTLKKICREC), 557–595 (LPPYAANIVAVSQEVLMKQIHKTSQCMWLMQALGFLLSA), 598–643 (VEEI…SNLF), 671–711 (PVVV…VKTL), 715–749 (FAPMVPQLCEMLGQMYSTIPQASAIDLTRQLVHIF), 756–798 (FPPI…ALKR), 810–840 (VKALFHCGVLSLKFPEAPTVKASCGFFTELL), 855–888 (ENGKVLLQAVLEGVGGQASRSLMDHFAEILFALN), and 892–926 (FSYLSIWIKEAMQQDGFPSARVSPEQKETFSQQIL). The 67-residue stretch at 40 to 106 (AQKWLMQAQV…KSQLFTHITR (67 aa)) folds into the Importin N-terminal domain.

The protein belongs to the importin beta family.

It localises to the cytoplasm. The protein resides in the nucleus. Its function is as follows. Functions in nuclear protein import as nuclear transport receptor. Serves as receptor for nuclear localization signals (NLS) in cargo substrates. Is thought to mediate docking of the importin/substrate complex to the nuclear pore complex (NPC) through binding to nucleoporin and the complex is subsequently translocated through the pore by an energy requiring, Ran-dependent mechanism. At the nucleoplasmic side of the NPC, Ran binds to the importin, the importin/substrate complex dissociates and importin is re-exported from the nucleus to the cytoplasm where GTP hydrolysis releases Ran. The directionality of nuclear import is thought to be conferred by an asymmetric distribution of the GTP- and GDP-bound forms of Ran between the cytoplasm and nucleus. This chain is Importin-13 (IPO13), found in Gallus gallus (Chicken).